Reading from the N-terminus, the 236-residue chain is Three prime repair exonuclease 2 (236 aa).

The Mg(2+) site is built by aspartate 14 and glutamate 16. Substrate is bound by residues 16–17 (EA) and tyrosine 122. The Proton donor/acceptor role is filled by histidine 188. Aspartate 193 is a binding site for Mg(2+). Substrate is bound at residue aspartate 193.

It belongs to the exonuclease superfamily. TREX family. As to quaternary structure, homodimer. Mg(2+) is required as a cofactor.

It is found in the nucleus. It catalyses the reaction Exonucleolytic cleavage in the 3'- to 5'-direction to yield nucleoside 5'-phosphates.. In terms of biological role, exonuclease with a preference for double-stranded DNA with mismatched 3' termini. May play a role in DNA repair. This Mus musculus (Mouse) protein is Three prime repair exonuclease 2 (Trex2).